A 131-amino-acid polypeptide reads, in one-letter code: Histone H2B.1 (131 aa).

Positions M1 to P20 are enriched in basic and acidic residues. A disordered region spans residues M1–K39. N6-acetyllysine; alternate is present on residues K8 and K9. Residues K8 and K9 each participate in a glycyl lysine isopeptide (Lys-Gly) (interchain with G-Cter in SUMO); alternate cross-link. S12 carries the phosphoserine modification. Position 13 is an N6-acetyllysine (K13). At K18 the chain carries N6-acetyllysine; alternate. A Glycyl lysine isopeptide (Lys-Gly) (interchain with G-Cter in SUMO); alternate cross-link involves residue K18. K19 is covalently cross-linked (Glycyl lysine isopeptide (Lys-Gly) (interchain with G-Cter in SUMO)). K125 participates in a covalent cross-link: Glycyl lysine isopeptide (Lys-Gly) (interchain with G-Cter in ubiquitin).

The protein belongs to the histone H2B family. In terms of assembly, the nucleosome is a histone octamer containing two molecules each of H2A, H2B, H3 and H4 assembled in one H3-H4 heterotetramer and two H2A-H2B heterodimers. The octamer wraps approximately 147 bp of DNA. Monoubiquitinated to form H2BK123ub1. H2BK123ub1 gives a specific tag for epigenetic transcriptional activation and is also prerequisite for H3K4me and H3K79me formation. H2BK123ub1 also modulates the formation of double-strand breaks during meiosis and is a prerequisite for DNA-damage checkpoint activation. In terms of processing, phosphorylated by STE20 to form H2BS10ph during progression through meiotic prophase. May be correlated with chromosome condensation. Post-translationally, acetylated by GCN5 to form H2BK11ac and H2BK16ac. H2BK16ac can also be formed by ESA1. Acetylation of N-terminal lysines and particularly formation of H2BK11acK16ac has a positive effect on transcription. Sumoylation to form H2BK6su or H2BK7su, and probably also H2BK16su or H2BK17su, occurs preferentially near the telomeres and represses gene transcription.

Its subcellular location is the nucleus. It is found in the chromosome. Core component of nucleosome. Nucleosomes wrap and compact DNA into chromatin, limiting DNA accessibility to the cellular machineries which require DNA as a template. Histones thereby play a central role in transcription regulation, DNA repair, DNA replication and chromosomal stability. DNA accessibility is regulated via a complex set of post-translational modifications of histones, also called histone code, and nucleosome remodeling. The protein is Histone H2B.1 (HTB1) of Scheffersomyces stipitis (strain ATCC 58785 / CBS 6054 / NBRC 10063 / NRRL Y-11545) (Yeast).